Consider the following 107-residue polypeptide: Nucleoid-associated protein GDI3467/Gdia_2910 (107 aa).

This sequence belongs to the YbaB/EbfC family. As to quaternary structure, homodimer.

Its subcellular location is the cytoplasm. The protein resides in the nucleoid. Functionally, binds to DNA and alters its conformation. May be involved in regulation of gene expression, nucleoid organization and DNA protection. The protein is Nucleoid-associated protein GDI3467/Gdia_2910 of Gluconacetobacter diazotrophicus (strain ATCC 49037 / DSM 5601 / CCUG 37298 / CIP 103539 / LMG 7603 / PAl5).